An 84-amino-acid chain; its full sequence is Cell division topological specificity factor (84 aa).

It belongs to the MinE family.

Functionally, prevents the cell division inhibition by proteins MinC and MinD at internal division sites while permitting inhibition at polar sites. This ensures cell division at the proper site by restricting the formation of a division septum at the midpoint of the long axis of the cell. In Paraburkholderia phytofirmans (strain DSM 17436 / LMG 22146 / PsJN) (Burkholderia phytofirmans), this protein is Cell division topological specificity factor.